The following is a 266-amino-acid chain: Mitochondrial genome maintenance protein MGM101 (266 aa).

The transit peptide at 1–23 (MLHSTKLVFRATPQALCFPVRSY) directs the protein to the mitochondrion. Composition is skewed to polar residues over residues 37–47 (KTTSKLAPSIT) and 57–68 (PSLQEPQSATST). The tract at residues 37-68 (KTTSKLAPSITTEDEVAEQDPSLQEPQSATST) is disordered.

Belongs to the MGM101 family. In terms of assembly, forms homooligomers in vitro.

It localises to the mitochondrion matrix. It is found in the mitochondrion nucleoid. In terms of biological role, plays a role in the replication of the mitochondrial genome and the maintenance of its telomeres. Able to catalyze strand annealing and D-loop formation. Binds a wide variety of DNA substrates. Exhibited the highest affinity for DNA molecules carrying 3' ssDNA overhangs (Y-form, 3' FLAP, 3' overhang) and for substrates with complex structures (X-O and Fork). Forms homogeneous ring-shaped structures at the ssDNA native telomeres ends. Oligomers seem to bind to the ssDNA as a filament until they reach the double-stranded region and induce the formation of bends and loops within the double-stranded part of the molecules. This is Mitochondrial genome maintenance protein MGM101 from Candida parapsilosis (strain CDC 317 / ATCC MYA-4646) (Yeast).